A 199-amino-acid chain; its full sequence is MCVCGIDEAGRGPVIGPMVMAMVCADDINFYVNDSKLLTRNKRSLIFNDVSGLYHKYYIINPAEIDDAVKKHSLNNLEEQYAEKLILKAECEKIYIDCFDVNESRLERILKDRTGKEVICRHHADRDIKIVSAASIIAKVLRDNEIEKLKSIYGDFGSGYPSDPKTLRFLEHSIINHDNIDNIVRKEWKTYKNLVQGHI.

The RNase H type-2 domain maps to 1 to 199 (MCVCGIDEAG…TYKNLVQGHI (199 aa)). A divalent metal cation-binding residues include Asp-7, Glu-8, and Asp-97.

It belongs to the RNase HII family. The cofactor is Mn(2+). Requires Mg(2+) as cofactor.

Its subcellular location is the cytoplasm. It catalyses the reaction Endonucleolytic cleavage to 5'-phosphomonoester.. Functionally, endonuclease that specifically degrades the RNA of RNA-DNA hybrids. This chain is Ribonuclease HII, found in Picrophilus torridus (strain ATCC 700027 / DSM 9790 / JCM 10055 / NBRC 100828 / KAW 2/3).